The following is a 71-amino-acid chain: Protein SlyX homolog (71 aa).

It belongs to the SlyX family.

The sequence is that of Protein SlyX homolog from Thioalkalivibrio sulfidiphilus (strain HL-EbGR7).